The following is a 240-amino-acid chain: Protein YIPF6 (240 aa).

The Cytoplasmic segment spans residues 1–91 (MVVSHLNRTV…PKKSSALLRD (91 aa)). A helical membrane pass occupies residues 92 to 112 (WDLWGPLLLCVTLALMLQGGS). Residues 113 to 125 (ADSEEDGRPQFAE) lie on the Lumenal side of the membrane. Residues 126–146 (VFVIIWFGSVIITLNSKLLGG) form a helical membrane-spanning segment. The Cytoplasmic segment spans residues 147-149 (TIS). Residues 150-170 (FFQSLCVLGYCILPLTVAMIV) form a helical membrane-spanning segment. Residues 171 to 172 (CR) are Lumenal-facing. Residues 173 to 193 (IVLLGGSGVVSFAVRLIVVTA) traverse the membrane as a helical segment. Residues 194-215 (SFSWSTFASTAFLADSQPTNRK) are Cytoplasmic-facing. A helical membrane pass occupies residues 216–236 (ALVVYPVFLFYFVIGWMILTF). Topologically, residues 237 to 240 (SPSH) are lumenal.

It belongs to the YIP1 family.

It localises to the golgi apparatus membrane. The sequence is that of Protein YIPF6 (yipf6) from Danio rerio (Zebrafish).